A 600-amino-acid polypeptide reads, in one-letter code: NADH-quinone oxidoreductase subunit C/D (600 aa).

An NADH dehydrogenase I subunit C region spans residues 1–190 (MVNNMTDLTA…SPFELTKAKQ (190 aa)). Residues 214 to 600 (DFMFLNLGPN…IDFVMSDVDR (387 aa)) are NADH dehydrogenase I subunit D.

The protein in the N-terminal section; belongs to the complex I 30 kDa subunit family. This sequence in the C-terminal section; belongs to the complex I 49 kDa subunit family. As to quaternary structure, NDH-1 is composed of 13 different subunits. Subunits NuoB, CD, E, F, and G constitute the peripheral sector of the complex.

It localises to the cell inner membrane. It carries out the reaction a quinone + NADH + 5 H(+)(in) = a quinol + NAD(+) + 4 H(+)(out). NDH-1 shuttles electrons from NADH, via FMN and iron-sulfur (Fe-S) centers, to quinones in the respiratory chain. The immediate electron acceptor for the enzyme in this species is believed to be ubiquinone. Couples the redox reaction to proton translocation (for every two electrons transferred, four hydrogen ions are translocated across the cytoplasmic membrane), and thus conserves the redox energy in a proton gradient. This Escherichia coli O6:H1 (strain CFT073 / ATCC 700928 / UPEC) protein is NADH-quinone oxidoreductase subunit C/D.